Consider the following 63-residue polypeptide: Small ribosomal subunit protein eS17 (63 aa).

This sequence belongs to the eukaryotic ribosomal protein eS17 family.

The sequence is that of Small ribosomal subunit protein eS17 from Methanococcus maripaludis (strain DSM 14266 / JCM 13030 / NBRC 101832 / S2 / LL).